The following is a 178-amino-acid chain: MNQSLFHHSKQQEYCPQCGAPLQIKQGKKGLFLGCSAYPECDYLRPLQRSEHKVLKTLDEICPKCGNLLQLKQGSFGMFIGCSHYPECDFVVREESESEEKITCPECKTGHLISRRGRQGKIFYGCDNFPKCKFSLPAKPYSVPCPTCHFPLSLLKSEDGEKQIFQCANKTCRHIFEQ.

This sequence to E.coli YrdD.

This is an uncharacterized protein from Haemophilus influenzae (strain ATCC 51907 / DSM 11121 / KW20 / Rd).